The chain runs to 1755 residues: Transposon Ty1-DR5 Gag-Pol polyprotein (1755 aa).

Composition is skewed to polar residues over residues 1–10, 48–60, and 127–152; these read MESQQLSNYP, TKANSQQTTTPAS, and QSQFPQYPSSVGTPLSTPSPESGNTF. Disordered stretches follow at residues 1-93, 126-173, and 352-421; these read MESQ…MMTQ, PQSQ…RPPP, and GSRN…SKST. Over residues 153-165 the composition is skewed to low complexity; the sequence is TDSSSADSDMTST. Residues 299-401 form an RNA-binding region; that stretch reads NNGIHINNKV…NSKSKTARAH (103 aa). Positions 402–418 are enriched in low complexity; that stretch reads NVSTSNNSPSTDNDSIS. Asp-461 acts as the For protease activity; shared with dimeric partner in catalysis. The tract at residues 583–640 is integrase-type zinc finger-like; that stretch reads NVHTSESTRKYPYPFIHRMLAHANAQTIRYSLKNNTITYFNESDVDWSSAIDYQCPDC. The Integrase catalytic domain occupies 660 to 835; the sequence is NSYEPFQYLH…AGLDISTLLP (176 aa). Mg(2+)-binding residues include Asp-671 and Asp-736. 3 disordered regions span residues 956–1087, 1092–1111, and 1130–1187; these read SKAV…ETEK, RSPSIDASPPENNSSHNIVP, and DLPL…DNET. Positions 960-969 are enriched in low complexity; it reads SPTDSTPPST. Polar residues predominate over residues 1005-1015; it reads STPQISNIEST. Residues 1038–1053 are compositionally biased toward basic and acidic residues; it reads ESSHASKSKDFRHSDS. Composition is skewed to polar residues over residues 1054-1082 and 1101-1111; these read YSENETNHTNVPISSTGGTNNKTVPQISD and PENNSSHNIVP. A Bipartite nuclear localization signal motif is present at residues 1178–1212; sequence KKRSLEDNETEIKVSRDTWNTKNMRSLEPPRSKKR. Residues 1338–1476 form the Reverse transcriptase Ty1/copia-type domain; that stretch reads NNYYITQLDI…DILGLEIKYQ (139 aa). The Mg(2+) site is built by Asp-1346, Asp-1427, Asp-1428, Asp-1610, Glu-1652, and Asp-1685. The region spanning 1610-1752 is the RNase H Ty1/copia-type domain; it reads DASYGNQPYY…IKTFKLLTNK (143 aa).

In terms of assembly, the capsid protein forms a homotrimer, from which the VLPs are assembled. The protease is a homodimer, whose active site consists of two apposed aspartic acid residues. In terms of processing, initially, virus-like particles (VLPs) are composed of the structural unprocessed proteins Gag and Gag-Pol, and also contain the host initiator methionine tRNA (tRNA(i)-Met) which serves as a primer for minus-strand DNA synthesis, and a dimer of genomic Ty RNA. Processing of the polyproteins occurs within the particle and proceeds by an ordered pathway, called maturation. First, the protease (PR) is released by autocatalytic cleavage of the Gag-Pol polyprotein yielding capsid protein p45 and a Pol-p154 precursor protein. This cleavage is a prerequisite for subsequent processing of Pol-p154 at the remaining sites to release the mature structural and catalytic proteins. Maturation takes place prior to the RT reaction and is required to produce transposition-competent VLPs.

The protein resides in the cytoplasm. Its subcellular location is the nucleus. It catalyses the reaction DNA(n) + a 2'-deoxyribonucleoside 5'-triphosphate = DNA(n+1) + diphosphate. The enzyme catalyses Endonucleolytic cleavage to 5'-phosphomonoester.. In terms of biological role, capsid protein (CA) is the structural component of the virus-like particle (VLP), forming the shell that encapsulates the retrotransposons dimeric RNA genome. The particles are assembled from trimer-clustered units and there are holes in the capsid shells that allow for the diffusion of macromolecules. CA also has nucleocapsid-like chaperone activity, promoting primer tRNA(i)-Met annealing to the multipartite primer-binding site (PBS), dimerization of Ty1 RNA and initiation of reverse transcription. The aspartyl protease (PR) mediates the proteolytic cleavages of the Gag and Gag-Pol polyproteins after assembly of the VLP. Functionally, reverse transcriptase/ribonuclease H (RT) is a multifunctional enzyme that catalyzes the conversion of the retro-elements RNA genome into dsDNA within the VLP. The enzyme displays a DNA polymerase activity that can copy either DNA or RNA templates, and a ribonuclease H (RNase H) activity that cleaves the RNA strand of RNA-DNA heteroduplexes during plus-strand synthesis and hydrolyzes RNA primers. The conversion leads to a linear dsDNA copy of the retrotransposon that includes long terminal repeats (LTRs) at both ends. Its function is as follows. Integrase (IN) targets the VLP to the nucleus, where a subparticle preintegration complex (PIC) containing at least integrase and the newly synthesized dsDNA copy of the retrotransposon must transit the nuclear membrane. Once in the nucleus, integrase performs the integration of the dsDNA into the host genome. This is Transposon Ty1-DR5 Gag-Pol polyprotein (TY1B-DR5) from Saccharomyces cerevisiae (strain ATCC 204508 / S288c) (Baker's yeast).